The sequence spans 530 residues: Phosphoenolpyruvate carboxykinase (ATP) (530 aa).

Substrate-binding residues include R58, Y195, and K201. ATP contacts are provided by residues K201, H220, and 236-244; that span reads GLSGTGKTT. Residues K201 and H220 each coordinate Mn(2+). D257 is a Mn(2+) binding site. ATP contacts are provided by residues E285, R321, 440–441, and T446; that span reads RI. Residue R321 participates in substrate binding.

This sequence belongs to the phosphoenolpyruvate carboxykinase (ATP) family. Mn(2+) serves as cofactor.

It is found in the cytoplasm. The catalysed reaction is oxaloacetate + ATP = phosphoenolpyruvate + ADP + CO2. The protein operates within carbohydrate biosynthesis; gluconeogenesis. Involved in the gluconeogenesis. Catalyzes the conversion of oxaloacetate (OAA) to phosphoenolpyruvate (PEP) through direct phosphoryl transfer between the nucleoside triphosphate and OAA. The chain is Phosphoenolpyruvate carboxykinase (ATP) from Staphylococcus aureus (strain MSSA476).